The chain runs to 197 residues: dTTP/UTP pyrophosphatase (197 aa).

Residue Asp-70 is the Proton acceptor of the active site.

Belongs to the Maf family. YhdE subfamily. A divalent metal cation is required as a cofactor.

It is found in the cytoplasm. It catalyses the reaction dTTP + H2O = dTMP + diphosphate + H(+). The enzyme catalyses UTP + H2O = UMP + diphosphate + H(+). In terms of biological role, nucleoside triphosphate pyrophosphatase that hydrolyzes dTTP and UTP. May have a dual role in cell division arrest and in preventing the incorporation of modified nucleotides into cellular nucleic acids. This Escherichia coli O6:K15:H31 (strain 536 / UPEC) protein is dTTP/UTP pyrophosphatase (yceF2).